Here is a 77-residue protein sequence, read N- to C-terminus: Translation initiation factor IF-1, chloroplastic (77 aa).

The S1-like domain occupies 1–71; the sequence is MKEQKWVHEG…TRGRIIYRLR (71 aa).

This sequence belongs to the IF-1 family. In terms of assembly, component of the 30S ribosomal translation pre-initiation complex which assembles on the 30S ribosome in the order IF-2 and IF-3, IF-1 and N-formylmethionyl-tRNA(fMet); mRNA recruitment can occur at any time during PIC assembly.

It localises to the plastid. The protein resides in the chloroplast. In terms of biological role, one of the essential components for the initiation of protein synthesis. Stabilizes the binding of IF-2 and IF-3 on the 30S subunit to which N-formylmethionyl-tRNA(fMet) subsequently binds. Helps modulate mRNA selection, yielding the 30S pre-initiation complex (PIC). Upon addition of the 50S ribosomal subunit IF-1, IF-2 and IF-3 are released leaving the mature 70S translation initiation complex. The protein is Translation initiation factor IF-1, chloroplastic of Cercidiphyllum japonicum (Katsura tree).